The chain runs to 196 residues: SAGA-associated factor 11 homolog (196 aa).

The tract at residues 1 to 22 (MSAANMPTTTGAQGSGNQVPTT) is disordered. The SGF11-type zinc-finger motif lies at 106–127 (CTCPNCDRLVAAARFAPHLEKC). The disordered stretch occupies residues 141-196 (RLATKEGATSAHLHSSGNTGGTDDEDDVDWSSDKRRKKSNQNSRNNGSKKNNGKTF). At serine 172 the chain carries Phosphoserine. Over residues 180–196 (NQNSRNNGSKKNNGKTF) the composition is skewed to low complexity.

This sequence belongs to the SGF11 family. As to quaternary structure, component of some SAGA transcription coactivator-HAT complexes, at least composed of Ada2b, not/nonstop, Pcaf/Gcn5, Sgf11 and Spt3. Within the SAGA complex, Sgf11, e(y)2, and not/nonstop form an additional subcomplex of SAGA called the DUB module (deubiquitination module). Interacts directly with not/nonstop. Interacts with the AMEX complex component xmas-2. Interacts with Cbp80; important for promoter recruitment of Sgf11 that is not associated with the DUB module.

The protein resides in the nucleus. Its subcellular location is the nucleoplasm. The protein localises to the cytoplasm. Its function is as follows. Component of the transcription regulatory histone acetylation (HAT) complex SAGA, a multiprotein complex that activates transcription by remodeling chromatin and mediating histone acetylation and deubiquitination. Within the SAGA complex, participates in a subcomplex that specifically deubiquitinates histone H2B. The SAGA complex is recruited to specific gene promoters by activators, where it is required for transcription. Required for nuclear receptor-mediated transactivation. Binds independently on SAGA to promoters in an RNA-dependent manner. Binds to mRNA and is essential for total mRNA export from the nucleus. Required to counteract heterochromatin silencing. Controls the development of neuronal connectivity in visual system by being required for accurate axon targeting in the optic lobe. Required for expression of ecdysone-induced genes such as br/broad. This chain is SAGA-associated factor 11 homolog, found in Drosophila simulans (Fruit fly).